Reading from the N-terminus, the 551-residue chain is Adenine deaminase (551 aa).

The protein belongs to the metallo-dependent hydrolases superfamily. Adenine deaminase family. It depends on Mn(2+) as a cofactor.

It catalyses the reaction adenine + H2O + H(+) = hypoxanthine + NH4(+). This is Adenine deaminase from Methanosarcina barkeri (strain Fusaro / DSM 804).